Here is a 260-residue protein sequence, read N- to C-terminus: MSTNNSVLVLKVGGALLQCEMGMARLMDTAAAMLANGQQVLMVHGGGCLVDEQLAANGMETVKLEGLRVTPPEQMPIIAGALAGTSNKILQGAATKAGIVSVGMSLADGNTVSAKIKDERLGLVGEVTPKDGTYLKFILEQGWMPICSSIAMMDDGQMLNVNADQAATALAKLVGGKLVLLSDVSGVLDGKGQLIHSLNGKQIADLVKQGVIEKGMKVKVEAALEVAQWMGQAVQVASWRDASQLIALAKGEAVGTQIQP.

Substrate contacts are provided by residues 46–47 (GG), arginine 68, and asparagine 160.

Belongs to the acetylglutamate kinase family. ArgB subfamily.

It is found in the cytoplasm. The catalysed reaction is N-acetyl-L-glutamate + ATP = N-acetyl-L-glutamyl 5-phosphate + ADP. Its pathway is amino-acid biosynthesis; L-arginine biosynthesis; N(2)-acetyl-L-ornithine from L-glutamate: step 2/4. In terms of biological role, catalyzes the ATP-dependent phosphorylation of N-acetyl-L-glutamate. The polypeptide is Acetylglutamate kinase (Shewanella sp. (strain W3-18-1)).